A 224-amino-acid polypeptide reads, in one-letter code: Leucyl/phenylalanyl-tRNA--protein transferase (224 aa).

It belongs to the L/F-transferase family.

Its subcellular location is the cytoplasm. The catalysed reaction is N-terminal L-lysyl-[protein] + L-leucyl-tRNA(Leu) = N-terminal L-leucyl-L-lysyl-[protein] + tRNA(Leu) + H(+). It carries out the reaction N-terminal L-arginyl-[protein] + L-leucyl-tRNA(Leu) = N-terminal L-leucyl-L-arginyl-[protein] + tRNA(Leu) + H(+). The enzyme catalyses L-phenylalanyl-tRNA(Phe) + an N-terminal L-alpha-aminoacyl-[protein] = an N-terminal L-phenylalanyl-L-alpha-aminoacyl-[protein] + tRNA(Phe). Its function is as follows. Functions in the N-end rule pathway of protein degradation where it conjugates Leu, Phe and, less efficiently, Met from aminoacyl-tRNAs to the N-termini of proteins containing an N-terminal arginine or lysine. This chain is Leucyl/phenylalanyl-tRNA--protein transferase, found in Rhodopseudomonas palustris (strain HaA2).